A 340-amino-acid polypeptide reads, in one-letter code: Glycerol-3-phosphate dehydrogenase [NAD(P)+] (340 aa).

NADPH-binding residues include Ser14, Phe15, Arg35, and Lys108. Positions 108 and 136 each coordinate sn-glycerol 3-phosphate. An NADPH-binding site is contributed by Ala140. Positions 191, 244, 254, 255, and 256 each coordinate sn-glycerol 3-phosphate. The Proton acceptor role is filled by Lys191. Position 255 (Arg255) interacts with NADPH. Residues Val279 and Glu281 each contribute to the NADPH site.

The protein belongs to the NAD-dependent glycerol-3-phosphate dehydrogenase family.

The protein resides in the cytoplasm. It carries out the reaction sn-glycerol 3-phosphate + NAD(+) = dihydroxyacetone phosphate + NADH + H(+). It catalyses the reaction sn-glycerol 3-phosphate + NADP(+) = dihydroxyacetone phosphate + NADPH + H(+). It functions in the pathway membrane lipid metabolism; glycerophospholipid metabolism. Functionally, catalyzes the reduction of the glycolytic intermediate dihydroxyacetone phosphate (DHAP) to sn-glycerol 3-phosphate (G3P), the key precursor for phospholipid synthesis. The protein is Glycerol-3-phosphate dehydrogenase [NAD(P)+] of Ectopseudomonas mendocina (strain ymp) (Pseudomonas mendocina).